The sequence spans 121 residues: Small ribosomal subunit protein uS13 (121 aa).

The tract at residues 94–121 (GLPVRGQRTRTNARTRKGKRKTVAGKKK) is disordered.

It belongs to the universal ribosomal protein uS13 family. As to quaternary structure, part of the 30S ribosomal subunit. Forms a loose heterodimer with protein S19. Forms two bridges to the 50S subunit in the 70S ribosome.

Functionally, located at the top of the head of the 30S subunit, it contacts several helices of the 16S rRNA. In the 70S ribosome it contacts the 23S rRNA (bridge B1a) and protein L5 of the 50S subunit (bridge B1b), connecting the 2 subunits; these bridges are implicated in subunit movement. Contacts the tRNAs in the A and P-sites. In Treponema pallidum (strain Nichols), this protein is Small ribosomal subunit protein uS13.